Here is a 513-residue protein sequence, read N- to C-terminus: ATP synthase subunit alpha (513 aa).

Position 169–176 (169–176) interacts with ATP; sequence GDRQTGKT.

The protein belongs to the ATPase alpha/beta chains family. As to quaternary structure, F-type ATPases have 2 components, CF(1) - the catalytic core - and CF(0) - the membrane proton channel. CF(1) has five subunits: alpha(3), beta(3), gamma(1), delta(1), epsilon(1). CF(0) has three main subunits: a(1), b(2) and c(9-12). The alpha and beta chains form an alternating ring which encloses part of the gamma chain. CF(1) is attached to CF(0) by a central stalk formed by the gamma and epsilon chains, while a peripheral stalk is formed by the delta and b chains.

It localises to the cell inner membrane. The enzyme catalyses ATP + H2O + 4 H(+)(in) = ADP + phosphate + 5 H(+)(out). Functionally, produces ATP from ADP in the presence of a proton gradient across the membrane. The alpha chain is a regulatory subunit. This Haemophilus influenzae (strain PittEE) protein is ATP synthase subunit alpha.